The primary structure comprises 509 residues: Meiotically up-regulated gene 157 protein (509 aa).

Helical transmembrane passes span 4-24 (WQAI…NIPW), 140-160 (LATL…QFPY), 296-316 (ACVL…LSHL), 368-388 (ILFM…LGFV), and 417-437 (ISGI…SLIV).

Its subcellular location is the endoplasmic reticulum membrane. Its function is as follows. Has a role in meiosis. This chain is Meiotically up-regulated gene 157 protein (mug157), found in Schizosaccharomyces pombe (strain 972 / ATCC 24843) (Fission yeast).